A 63-amino-acid chain; its full sequence is UPF0434 protein Sde_1297 (63 aa).

Belongs to the UPF0434 family.

This is UPF0434 protein Sde_1297 from Saccharophagus degradans (strain 2-40 / ATCC 43961 / DSM 17024).